Here is a 549-residue protein sequence, read N- to C-terminus: Hydroxylamine reductase (549 aa).

[4Fe-4S] cluster-binding residues include cysteine 5, cysteine 8, cysteine 17, and cysteine 23. Hybrid [4Fe-2O-2S] cluster contacts are provided by histidine 243, glutamate 267, cysteine 311, cysteine 403, cysteine 431, cysteine 456, glutamate 491, and lysine 493. Cysteine 403 is modified (cysteine persulfide).

It belongs to the HCP family. It depends on [4Fe-4S] cluster as a cofactor. Hybrid [4Fe-2O-2S] cluster is required as a cofactor.

It is found in the cytoplasm. It carries out the reaction A + NH4(+) + H2O = hydroxylamine + AH2 + H(+). In terms of biological role, catalyzes the reduction of hydroxylamine to form NH(3) and H(2)O. The sequence is that of Hydroxylamine reductase from Desulfitobacterium hafniense (strain DSM 10664 / DCB-2).